The sequence spans 124 residues: MATINQLVRKPRSMKVAKSNVPALEACPQKRGVCTRVYTTTPKKPNSALRKVCRVRLTNGFEVTSYIGGEGHNLQEHSVILIRGGRVKDLPGVRYHTVRGALDCSGVKDRKQSRSKYGVKKPKA.

Position 89 is a 3-methylthioaspartic acid (Asp89).

Belongs to the universal ribosomal protein uS12 family. Part of the 30S ribosomal subunit. Contacts proteins S8 and S17. May interact with IF1 in the 30S initiation complex.

Its function is as follows. With S4 and S5 plays an important role in translational accuracy. Functionally, interacts with and stabilizes bases of the 16S rRNA that are involved in tRNA selection in the A site and with the mRNA backbone. Located at the interface of the 30S and 50S subunits, it traverses the body of the 30S subunit contacting proteins on the other side and probably holding the rRNA structure together. The combined cluster of proteins S8, S12 and S17 appears to hold together the shoulder and platform of the 30S subunit. The sequence is that of Small ribosomal subunit protein uS12 from Yersinia enterocolitica serotype O:8 / biotype 1B (strain NCTC 13174 / 8081).